We begin with the raw amino-acid sequence, 218 residues long: Claudin-5 (218 aa).

Topologically, residues 1–7 are cytoplasmic; it reads MGSAALE. The helical transmembrane segment at 8–28 threads the bilayer; that stretch reads ILGLVLCLVGWVGLILACGLP. Residues 29 to 81 are Extracellular-facing; that stretch reads MWQVTAFLDHNIVTAQTTWKGLWMSCVVQSTGHMQCKVYESVLALSAEVQAAR. Residues 82–102 form a helical membrane-spanning segment; it reads ALTVGAVLLALVALFVTLTGA. The Cytoplasmic portion of the chain corresponds to 103–123; that stretch reads QCTTCVAPGPVKARVALTGGA. The chain crosses the membrane as a helical span at residues 124-144; it reads LYAVCGLLALVPLCWFANIVV. At 145 to 160 the chain is on the extracellular side; that stretch reads REFYDPTVPVSQKYEL. Residues 161 to 181 traverse the membrane as a helical segment; the sequence is GAALYIGWAASALLMCGGGLV. At 182-218 the chain is on the cytoplasmic side; that stretch reads CCGAWVCTGRPEFSFPVKYSAPRRPTANGDYDKKNYV. The interval 217-218 is interactions with TJP1, TJP2 and TJP3; the sequence is YV.

This sequence belongs to the claudin family. In terms of assembly, interacts with MPDZ. Directly interacts with TJP1/ZO-1, TJP2/ZO-2 and TJP3/ZO-3. In terms of tissue distribution, widely expressed with highest levels in the lung.

The protein resides in the cell junction. Its subcellular location is the tight junction. It localises to the cell membrane. Its function is as follows. Plays a major role in tight junction-specific obliteration of the intercellular space, through calcium-independent cell-adhesion activity. The polypeptide is Claudin-5 (Cldn5) (Mus musculus (Mouse)).